The following is a 529-amino-acid chain: Type I restriction enzyme EcoKI methylase subunit (529 aa).

S-adenosyl-L-methionine is bound by residues 148–153, 178–180, and Glu-216; these read QYFTPR and TAG.

It belongs to the N(4)/N(6)-methyltransferase family. As to quaternary structure, the type I restriction/modification system is composed of three polypeptides R, M and S. The restriction enzyme has stoichiometry R(2)M(2)S(1). The methyltransferase is composed of M(2)S(1). (Microbial infection) Interacts with Escherichia phage T7 protein Ocr; this interaction leads to the inhibition of the methyltransferase restriction enzyme M.EcoKI composed of M(2)S(1).

It carries out the reaction a 2'-deoxyadenosine in DNA + S-adenosyl-L-methionine = an N(6)-methyl-2'-deoxyadenosine in DNA + S-adenosyl-L-homocysteine + H(+). In terms of biological role, the subtype gamma methyltransferase (M) subunit of a type I restriction enzyme. The M and S subunits together form a methyltransferase (MTase) that methylates A-2 on the top and A-3 on the bottom strand of the sequence 5'-AACN(6)GTGC-3'. In the presence of the R subunit the complex can also act as an endonuclease, binding to the same target sequence but cutting the DNA some distance from this site. Whether the DNA is cut or modified depends on the methylation state of the target sequence. When the target site is unmodified, the DNA is cut. When the target site is hemimethylated, the complex acts as a maintenance MTase modifying the DNA so that both strands become methylated. After locating a non-methylated recognition site, the enzyme complex serves as a molecular motor that translocates DNA in an ATP-dependent manner until a collision occurs that triggers cleavage. The chain is Type I restriction enzyme EcoKI methylase subunit from Escherichia coli (strain K12).